A 611-amino-acid chain; its full sequence is Pseudomonine synthase PmsE (611 aa).

The 76-residue stretch at 533-608 folds into the Carrier domain; sequence VSVENTRTWL…SWWALVEARQ (76 aa). Position 569 is an O-(pantetheine 4'-phosphoryl)serine (serine 569).

Belongs to the ATP-dependent AMP-binding enzyme family. Pantetheine 4'-phosphate is required as a cofactor.

It catalyses the reaction salicylate + holo-[ACP] + ATP = salicyl-[ACP] + AMP + diphosphate. It functions in the pathway siderophore biosynthesis; pseudomonine biosynthesis. Involved in the biosynthesis of the siderophore pseudomonine. Specifically adenylates salicylate and loads it onto its peptidyl carrier domain, via a thioester linkage to the phosphopanthetheine moiety. This is Pseudomonine synthase PmsE from Pseudomonas entomophila (strain L48).